A 256-amino-acid chain; its full sequence is Leucyl/phenylalanyl-tRNA--protein transferase (256 aa).

Belongs to the L/F-transferase family.

It is found in the cytoplasm. The enzyme catalyses N-terminal L-lysyl-[protein] + L-leucyl-tRNA(Leu) = N-terminal L-leucyl-L-lysyl-[protein] + tRNA(Leu) + H(+). It carries out the reaction N-terminal L-arginyl-[protein] + L-leucyl-tRNA(Leu) = N-terminal L-leucyl-L-arginyl-[protein] + tRNA(Leu) + H(+). The catalysed reaction is L-phenylalanyl-tRNA(Phe) + an N-terminal L-alpha-aminoacyl-[protein] = an N-terminal L-phenylalanyl-L-alpha-aminoacyl-[protein] + tRNA(Phe). In terms of biological role, functions in the N-end rule pathway of protein degradation where it conjugates Leu, Phe and, less efficiently, Met from aminoacyl-tRNAs to the N-termini of proteins containing an N-terminal arginine or lysine. The protein is Leucyl/phenylalanyl-tRNA--protein transferase of Hydrogenovibrio crunogenus (strain DSM 25203 / XCL-2) (Thiomicrospira crunogena).